The primary structure comprises 275 residues: Diaminopimelate epimerase (275 aa).

Substrate is bound by residues Asn12, Gln45, and Asn65. Cys74 (proton donor) is an active-site residue. Substrate is bound by residues 75–76 (GN), Asn158, Asn191, and 209–210 (ER). Cys218 functions as the Proton acceptor in the catalytic mechanism. Substrate is bound at residue 219–220 (GT).

The protein belongs to the diaminopimelate epimerase family. As to quaternary structure, homodimer.

It is found in the cytoplasm. The enzyme catalyses (2S,6S)-2,6-diaminopimelate = meso-2,6-diaminopimelate. The protein operates within amino-acid biosynthesis; L-lysine biosynthesis via DAP pathway; DL-2,6-diaminopimelate from LL-2,6-diaminopimelate: step 1/1. In terms of biological role, catalyzes the stereoinversion of LL-2,6-diaminopimelate (L,L-DAP) to meso-diaminopimelate (meso-DAP), a precursor of L-lysine and an essential component of the bacterial peptidoglycan. The polypeptide is Diaminopimelate epimerase (Shewanella putrefaciens (strain CN-32 / ATCC BAA-453)).